The sequence spans 234 residues: Proteasome subunit alpha type-6 (234 aa).

Position 14 is a phosphoserine (Ser14). Lys191 participates in a covalent cross-link: Glycyl lysine isopeptide (Lys-Gly) (interchain with G-Cter in ubiquitin).

Belongs to the peptidase T1A family. The 26S proteasome consists of a 20S proteasome core and two 19S regulatory subunits. The 20S proteasome core is composed of 28 subunits that are arranged in four stacked rings, resulting in a barrel-shaped structure. The two end rings are each formed by seven alpha subunits, and the two central rings are each formed by seven beta subunits. The catalytic chamber with the active sites is on the inside of the barrel.

The protein resides in the cytoplasm. The protein localises to the nucleus. In terms of biological role, the proteasome degrades poly-ubiquitinated proteins in the cytoplasm and in the nucleus. It is essential for the regulated turnover of proteins and for the removal of misfolded proteins. The proteasome is a multicatalytic proteinase complex that is characterized by its ability to cleave peptides with Arg, Phe, Tyr, Leu, and Glu adjacent to the leaving group at neutral or slightly basic pH. It has an ATP-dependent proteolytic activity. The polypeptide is Proteasome subunit alpha type-6 (PRE5) (Saccharomyces cerevisiae (strain ATCC 204508 / S288c) (Baker's yeast)).